A 643-amino-acid polypeptide reads, in one-letter code: DNA-directed RNA polymerase subunit beta' (643 aa).

The Zn(2+) site is built by C83, C85, C98, and C101. The Mg(2+) site is built by D480, D482, and D484.

This sequence belongs to the RNA polymerase beta' chain family. RpoC1 subfamily. As to quaternary structure, in plastids the minimal PEP RNA polymerase catalytic core is composed of four subunits: alpha, beta, beta', and beta''. When a (nuclear-encoded) sigma factor is associated with the core the holoenzyme is formed, which can initiate transcription. The cofactor is Mg(2+). It depends on Zn(2+) as a cofactor.

The protein localises to the plastid. It localises to the organellar chromatophore. It carries out the reaction RNA(n) + a ribonucleoside 5'-triphosphate = RNA(n+1) + diphosphate. DNA-dependent RNA polymerase catalyzes the transcription of DNA into RNA using the four ribonucleoside triphosphates as substrates. The chain is DNA-directed RNA polymerase subunit beta' from Paulinella chromatophora.